The following is a 551-amino-acid chain: uncharacterized protein (551 aa).

The next 6 helical transmembrane spans lie at 1–21 (MIAYIFLALFTIAAVIFIVNS), 25–45 (WTYFFAITLFTFLFGGMLMVS), 99–119 (GALFGVIGLLALLGYAIFGFN), 124–144 (LGVLGNSIGALLFIVSFSLMW), 266–286 (FAFLAGVPSTDFGALASGVFY), and 490–510 (FLDLAFAGGVLMNVAGLSAED).

It is found in the cell membrane. This is an uncharacterized protein from Haemophilus influenzae (strain ATCC 51907 / DSM 11121 / KW20 / Rd).